The following is a 205-amino-acid chain: ATP-dependent dethiobiotin synthetase BioD (205 aa).

Thr-16 is a binding site for Mg(2+). Residue Lys-32 is part of the active site. Substrate is bound at residue Thr-36. Glu-97 contributes to the Mg(2+) binding site. 97–100 (EGAG) serves as a coordination point for ATP.

Belongs to the dethiobiotin synthetase family. As to quaternary structure, homodimer. The cofactor is Mg(2+).

It localises to the cytoplasm. The catalysed reaction is (7R,8S)-7,8-diammoniononanoate + CO2 + ATP = (4R,5S)-dethiobiotin + ADP + phosphate + 3 H(+). Its pathway is cofactor biosynthesis; biotin biosynthesis; biotin from 7,8-diaminononanoate: step 1/2. Functionally, catalyzes a mechanistically unusual reaction, the ATP-dependent insertion of CO2 between the N7 and N8 nitrogen atoms of 7,8-diaminopelargonic acid (DAPA, also called 7,8-diammoniononanoate) to form a ureido ring. The chain is ATP-dependent dethiobiotin synthetase BioD from Paramagnetospirillum magneticum (strain ATCC 700264 / AMB-1) (Magnetospirillum magneticum).